A 249-amino-acid polypeptide reads, in one-letter code: Granaticin polyketide synthase putative ketoacyl reductase 2 (249 aa).

12-36 (LVTGSSSGIGQTVAQRLAAEGYRVV) provides a ligand contact to NAD(+). Ser-144 provides a ligand contact to substrate. Tyr-157 functions as the Proton acceptor in the catalytic mechanism.

Belongs to the short-chain dehydrogenases/reductases (SDR) family.

The protein operates within antibiotic biosynthesis; granaticin biosynthesis. This Streptomyces violaceoruber protein is Granaticin polyketide synthase putative ketoacyl reductase 2 (gra-orf6).